Here is a 579-residue protein sequence, read N- to C-terminus: Arginine--tRNA ligase (579 aa).

The 'HIGH' region motif lies at Ala127–His137.

The protein belongs to the class-I aminoacyl-tRNA synthetase family. Monomer.

It is found in the cytoplasm. The catalysed reaction is tRNA(Arg) + L-arginine + ATP = L-arginyl-tRNA(Arg) + AMP + diphosphate. The chain is Arginine--tRNA ligase from Acidithiobacillus ferrooxidans (strain ATCC 23270 / DSM 14882 / CIP 104768 / NCIMB 8455) (Ferrobacillus ferrooxidans (strain ATCC 23270)).